Here is a 678-residue protein sequence, read N- to C-terminus: DNA ligase (678 aa).

NAD(+) contacts are provided by residues 47–51 (DSDYD), 96–97 (SL), and Glu-122. Residue Lys-124 is the N6-AMP-lysine intermediate of the active site. 4 residues coordinate NAD(+): Arg-145, Glu-182, Lys-300, and Lys-324. Zn(2+) contacts are provided by Cys-418, Cys-421, Cys-436, and Cys-442. The BRCT domain maps to 602 to 678 (AYNESFTGKT…ILEDNLKDLL (77 aa)).

The protein belongs to the NAD-dependent DNA ligase family. LigA subfamily. It depends on Mg(2+) as a cofactor. Mn(2+) serves as cofactor.

It carries out the reaction NAD(+) + (deoxyribonucleotide)n-3'-hydroxyl + 5'-phospho-(deoxyribonucleotide)m = (deoxyribonucleotide)n+m + AMP + beta-nicotinamide D-nucleotide.. Its function is as follows. DNA ligase that catalyzes the formation of phosphodiester linkages between 5'-phosphoryl and 3'-hydroxyl groups in double-stranded DNA using NAD as a coenzyme and as the energy source for the reaction. It is essential for DNA replication and repair of damaged DNA. This chain is DNA ligase, found in Francisella tularensis subsp. novicida (strain U112).